Reading from the N-terminus, the 277-residue chain is MVTANSTVKVGNVTFSNSAPLALIAGPCQMETRDHAFEMAGRLKEMTDKLGIGLVYKSSFDKANRTSLKAARGIGLEKALEVFSDLKKEYGFPVLTDIHTEEQCAAVAPVVDVLQIPAFLCRQTDLLIAAARTGRVVNVKKGQFLAPWDMKNVLAKITESGNPNVLATERGVSFGYNTLVSDMRALPIMAGLGAPVIFDATHSVQQPGGQGGSTGGQREFVETLARAAVAVGVAGLFIETHEDPDNAPSDGPNMVPIDKMPALLEKLMAFDRIAKAL.

The protein belongs to the KdsA family.

Its subcellular location is the cytoplasm. The catalysed reaction is D-arabinose 5-phosphate + phosphoenolpyruvate + H2O = 3-deoxy-alpha-D-manno-2-octulosonate-8-phosphate + phosphate. The protein operates within carbohydrate biosynthesis; 3-deoxy-D-manno-octulosonate biosynthesis; 3-deoxy-D-manno-octulosonate from D-ribulose 5-phosphate: step 2/3. It functions in the pathway bacterial outer membrane biogenesis; lipopolysaccharide biosynthesis. This Brucella melitensis biotype 2 (strain ATCC 23457) protein is 2-dehydro-3-deoxyphosphooctonate aldolase.